A 429-amino-acid chain; its full sequence is Melanoma-associated antigen 11 (429 aa).

Disordered stretches follow at residues 1 to 30 and 188 to 215; these read METQFRRGGLGCSPASIKRKKKREDSGDFG and IFGSLSDEGSGSQEKEGPSTSPDLIDPE. Residues 194 to 209 are compositionally biased toward polar residues; it reads DEGSGSQEKEGPSTSP. Residues 222–421 enclose the MAGE domain; the sequence is LHDKIIDLVH…TSYPSLYEDA (200 aa).

As to expression, expressed in tumors of several types, such as melanoma, head and neck squamous cell carcinoma, lung carcinoma and breast carcinoma. Expressed in testis, ovary, prostate, cancerous prostate, breast and adrenal tissue.

The protein localises to the nucleus. It is found in the cytoplasm. Acts as androgen receptor coregulator that increases androgen receptor activity by modulating the receptors interdomain interaction. May play a role in embryonal development and tumor transformation or aspects of tumor progression. In Homo sapiens (Human), this protein is Melanoma-associated antigen 11.